The chain runs to 264 residues: Phosphonoacetaldehyde hydrolase (264 aa).

D9 acts as the Nucleophile in catalysis. Positions 9 and 11 each coordinate Mg(2+). The Schiff-base intermediate with substrate role is filled by K50. Position 183 (D183) interacts with Mg(2+).

It belongs to the HAD-like hydrolase superfamily. PhnX family. As to quaternary structure, homodimer. Requires Mg(2+) as cofactor.

It carries out the reaction phosphonoacetaldehyde + H2O = acetaldehyde + phosphate + H(+). Its function is as follows. Involved in phosphonate degradation. The chain is Phosphonoacetaldehyde hydrolase from Bacillus cereus (strain AH820).